The chain runs to 437 residues: Enolase (437 aa).

Residues His160 and Glu169 each coordinate substrate. Catalysis depends on Glu212, which acts as the Proton donor. 3 residues coordinate Mg(2+): Asp247, Glu296, and Asp321. Substrate contacts are provided by Glu296 and Asp321. Lys346 (proton acceptor) is an active-site residue. Residues 373–376 (SHRS) and Lys397 each bind substrate.

This sequence belongs to the enolase family. As to quaternary structure, homodimer. It depends on Mg(2+) as a cofactor.

The protein localises to the cytoplasm. It catalyses the reaction (2R)-2-phosphoglycerate = phosphoenolpyruvate + H2O. It participates in carbohydrate degradation; glycolysis; pyruvate from D-glyceraldehyde 3-phosphate: step 4/5. The polypeptide is Enolase (ENO) (Eremothecium gossypii (strain ATCC 10895 / CBS 109.51 / FGSC 9923 / NRRL Y-1056) (Yeast)).